Here is a 252-residue protein sequence, read N- to C-terminus: 3-deoxy-manno-octulosonate cytidylyltransferase (252 aa).

It belongs to the KdsB family.

Its subcellular location is the cytoplasm. The catalysed reaction is 3-deoxy-alpha-D-manno-oct-2-ulosonate + CTP = CMP-3-deoxy-beta-D-manno-octulosonate + diphosphate. Its pathway is nucleotide-sugar biosynthesis; CMP-3-deoxy-D-manno-octulosonate biosynthesis; CMP-3-deoxy-D-manno-octulosonate from 3-deoxy-D-manno-octulosonate and CTP: step 1/1. The protein operates within bacterial outer membrane biogenesis; lipopolysaccharide biosynthesis. Activates KDO (a required 8-carbon sugar) for incorporation into bacterial lipopolysaccharide in Gram-negative bacteria. This is 3-deoxy-manno-octulosonate cytidylyltransferase from Trichlorobacter lovleyi (strain ATCC BAA-1151 / DSM 17278 / SZ) (Geobacter lovleyi).